Here is a 391-residue protein sequence, read N- to C-terminus: 3-ketoacyl-CoA thiolase (391 aa).

The Acyl-thioester intermediate role is filled by cysteine 95. Catalysis depends on proton acceptor residues histidine 347 and cysteine 377.

It belongs to the thiolase-like superfamily. Thiolase family. In terms of assembly, heterotetramer of two alpha chains (FadB) and two beta chains (FadA).

The protein resides in the cytoplasm. The enzyme catalyses an acyl-CoA + acetyl-CoA = a 3-oxoacyl-CoA + CoA. Its pathway is lipid metabolism; fatty acid beta-oxidation. In terms of biological role, catalyzes the final step of fatty acid oxidation in which acetyl-CoA is released and the CoA ester of a fatty acid two carbons shorter is formed. In Pseudomonas fluorescens (strain Pf0-1), this protein is 3-ketoacyl-CoA thiolase.